We begin with the raw amino-acid sequence, 494 residues long: NAD(P)H-quinone oxidoreductase subunit 2 B, chloroplastic (494 aa).

13 consecutive transmembrane segments (helical) span residues 6–26 (LLLFHGGSIFPECILILGLIL), 39–59 (TPWFYFISLTSLVMSITVLLF), 81–101 (IFRFLILLCSTLCIPLSVEYI), 106–126 (MAITEFLLFLLTAALGGMVLC), 131–151 (LVTIFVALECFSLCSYLLSGY), 166–186 (LLMGGASSSILVYGFSWLYGL), 211–231 (ILIALISIAVGIGFKLSLVPF), 277–297 (WHLLLEILAILSMILGNLIAI), 305–325 (MLAYSSMGQIGYIIIGIIAGD), 336–356 (YMLFYIFMNLGTFACIVLFGL), 377–397 (AFSLALCLLSLGGIPPLAGFF), 413–433 (LLVSIGPLMSVISIYYYLKII), and 468–488 (MIVCVTASTTLGIVMNPIIAI).

Belongs to the complex I subunit 2 family. In terms of assembly, NDH is composed of at least 16 different subunits, 5 of which are encoded in the nucleus.

The protein resides in the plastid. It is found in the chloroplast thylakoid membrane. The enzyme catalyses a plastoquinone + NADH + (n+1) H(+)(in) = a plastoquinol + NAD(+) + n H(+)(out). It carries out the reaction a plastoquinone + NADPH + (n+1) H(+)(in) = a plastoquinol + NADP(+) + n H(+)(out). NDH shuttles electrons from NAD(P)H:plastoquinone, via FMN and iron-sulfur (Fe-S) centers, to quinones in the photosynthetic chain and possibly in a chloroplast respiratory chain. The immediate electron acceptor for the enzyme in this species is believed to be plastoquinone. Couples the redox reaction to proton translocation, and thus conserves the redox energy in a proton gradient. This is NAD(P)H-quinone oxidoreductase subunit 2 B, chloroplastic from Cycas taitungensis (Prince sago).